A 113-amino-acid polypeptide reads, in one-letter code: Translation initiation factor IF-1, chloroplastic (113 aa).

The region spanning 8 to 83 is the S1-like domain; the sequence is REKKNPREAK…SKGRIIYRLP (76 aa). The segment at 86 to 113 is disordered; it reads DSKRIEDSKDSEDLKDSEDLKDTKDSKD.

Belongs to the IF-1 family. As to quaternary structure, component of the 30S ribosomal translation pre-initiation complex which assembles on the 30S ribosome in the order IF-2 and IF-3, IF-1 and N-formylmethionyl-tRNA(fMet); mRNA recruitment can occur at any time during PIC assembly.

The protein localises to the plastid. It is found in the chloroplast. Functionally, one of the essential components for the initiation of protein synthesis. Stabilizes the binding of IF-2 and IF-3 on the 30S subunit to which N-formylmethionyl-tRNA(fMet) subsequently binds. Helps modulate mRNA selection, yielding the 30S pre-initiation complex (PIC). Upon addition of the 50S ribosomal subunit IF-1, IF-2 and IF-3 are released leaving the mature 70S translation initiation complex. This is Translation initiation factor IF-1, chloroplastic from Hordeum vulgare (Barley).